The primary structure comprises 80 residues: Cell division protein ZapB (80 aa).

Positions 3-80 (LEILEQLEAK…GLLGKMEEVE (78 aa)) form a coiled coil. The segment at 41–62 (LEQANNGRSEVEQEAQKARDEQ) is disordered. The span at 49 to 62 (SEVEQEAQKARDEQ) shows a compositional bias: basic and acidic residues.

It belongs to the ZapB family. Homodimer. The ends of the coiled-coil dimer bind to each other, forming polymers. Interacts with FtsZ.

Its subcellular location is the cytoplasm. In terms of biological role, non-essential, abundant cell division factor that is required for proper Z-ring formation. It is recruited early to the divisome by direct interaction with FtsZ, stimulating Z-ring assembly and thereby promoting cell division earlier in the cell cycle. Its recruitment to the Z-ring requires functional FtsA or ZipA. The sequence is that of Cell division protein ZapB from Aliivibrio salmonicida (strain LFI1238) (Vibrio salmonicida (strain LFI1238)).